The primary structure comprises 657 residues: Threonine--tRNA ligase (657 aa).

Residues 7-70 (QQASIAITLP…LCDANIEIVT (64 aa)) form the TGS domain. Residues 253–555 (DHRKLGTELE…LIEHTAGNFP (303 aa)) are catalytic. Zn(2+)-binding residues include Cys-351, His-402, and His-532.

It belongs to the class-II aminoacyl-tRNA synthetase family. As to quaternary structure, homodimer. Zn(2+) serves as cofactor.

The protein localises to the cytoplasm. It carries out the reaction tRNA(Thr) + L-threonine + ATP = L-threonyl-tRNA(Thr) + AMP + diphosphate + H(+). Catalyzes the attachment of threonine to tRNA(Thr) in a two-step reaction: L-threonine is first activated by ATP to form Thr-AMP and then transferred to the acceptor end of tRNA(Thr). Also edits incorrectly charged L-seryl-tRNA(Thr). In Chlorobium limicola (strain DSM 245 / NBRC 103803 / 6330), this protein is Threonine--tRNA ligase.